A 199-amino-acid chain; its full sequence is MFSRNFTTPSIRIYLNSCVSHRSFHNTTVSQSWLSRIRDRFRGTKEDEKKQIADKDMAAMKVVIPPKKRVSKWKDIQLFEKFAEPSLNREDSLKMINEIRKSLQLQTPWSPEARLQAVKLAYQKTGRIVYDAPLQNIHNWDDLYNYYDKIVDYGDTTLHGRLAWKPTPGLMSLPNVVLHVDENGYPLERKKRRLSRSVA.

It localises to the mitochondrion. This is an uncharacterized protein from Schizosaccharomyces pombe (strain 972 / ATCC 24843) (Fission yeast).